A 127-amino-acid polypeptide reads, in one-letter code: Large ribosomal subunit protein bL21c (127 aa).

This sequence belongs to the bacterial ribosomal protein bL21 family. Part of the 50S ribosomal subunit.

It is found in the plastid. It localises to the chloroplast. In terms of biological role, this protein binds to 23S rRNA. In Adiantum capillus-veneris (Maidenhair fern), this protein is Large ribosomal subunit protein bL21c.